The chain runs to 389 residues: MAAELIKEYVPIVSEYAPGLIEGLLSWKGAVGLVAATGIGYVLIIQRLQNTSATKNLWGLTGGGVQAKDVSKVADVYDKSYGKEGDGSLTLHHLDKKESVAVVDTFYNLVTDGYEACWDTSFHFSPRPRFTNFRTAQILHEARIGYMARIQPGFKVLDCGCGIGNPGRTVAALTGAHVTGITINEYQVKRALYHTKKAGLTGLFTPVQGDFTDMPFADKTFDAAFAIEATCHAPKLEQVYGEIFRVLKPGAFFAVYEAVTTDKFDPANKRHVEIINSLVYGNGIPDMRTWKQAEEAGKNVGFKLCCAFDAGAASPVALPWWERVKDMINWGVVKYTKAACLALDSLRLLPKDYWKVANMVGDSLPDLVESGETGIFTPMYLLVWQKPEE.

Residues 25–45 form a helical membrane-spanning segment; that stretch reads LSWKGAVGLVAATGIGYVLII.

The protein belongs to the class I-like SAM-binding methyltransferase superfamily. Erg6/SMT family.

It is found in the microsome membrane. Unable to convert squalene, botryococcene, cycloartenol, zymosterol or lanosterol to mono-, di-, tri- or tetramethylated derivatives. In Botryococcus braunii (Green alga), this protein is Sterol methyltransferase-like 2 (SMT-2).